The primary structure comprises 858 residues: Volume-regulated anion channel subunit LRRC8D (858 aa).

Residues 1 to 22 are Cytoplasmic-facing; that stretch reads MFTLAEVASLNDIQPTYRILKP. A helical membrane pass occupies residues 23–48; it reads WWDVFMDYLAVVMLMVAIFAGTMQLT. The Extracellular portion of the chain corresponds to 49–163; sequence KDQVVCLPVL…YHLALPWYSK (115 aa). A disulfide bridge connects residues C54 and C354. Residues 164–182 form a helical membrane-spanning segment; the sequence is YFPYLALIHTIILMVSSNF. Over 183-308 the chain is Cytoplasmic; the sequence is WFKYPKTCSK…EDSDLIYKLY (126 aa). A disordered region spans residues 221 to 251; the sequence is SEENKQRITGAQTLPKHVSTSSDEGSPSAST. Over residues 227 to 251 the composition is skewed to polar residues; that stretch reads RITGAQTLPKHVSTSSDEGSPSAST. A phosphoserine mark is found at S241, S242, and S246. A helical transmembrane segment spans residues 309 to 328; the sequence is VVQTVIKTAKFIFILCYTAN. The Extracellular portion of the chain corresponds to 329-360; that stretch reads FVNAISFEHVCKPKVEHLIGYEVFECTHNMAY. The chain crosses the membrane as a helical span at residues 361-386; sequence MLKKLLISYISIICVYGFICLYTLFW. At 387 to 858 the chain is on the cytoplasmic side; the sequence is LFRIPLKEYS…DINIPFANGI (472 aa). 13 LRR repeats span residues 514–534, 538–559, 561–582, 589–609, 612–632, 636–657, 659–680, 684–705, 707–728, 730–751, 753–774, 776–797, and 799–820; these read NLQE…AFSF, HLRC…VYLL, NLRE…IGLE, HLKI…ITDV, HLTK…NSLK, NVAE…IFSL, NLQE…ISFQ, RLTC…ITHV, NLES…VFSL, KLRC…IGLL, NLQH…LFKC, KLRT…VGQL, and QLTQ…LGQC.

Belongs to the LRRC8 family. In terms of assembly, heterohexamer; oligomerizes with other LRRC8 proteins (LRRC8A, LRRC8B, LRRC8C and/or LRRC8E) to form a heterohexamer. In vivo, the subunit composition may depend primarily on expression levels, and heterooligomeric channels containing various proportions of the different LRRC8 proteins may coexist.

It localises to the cell membrane. The protein resides in the endoplasmic reticulum membrane. The enzyme catalyses chloride(in) = chloride(out). The catalysed reaction is iodide(out) = iodide(in). It catalyses the reaction taurine(out) = taurine(in). Functionally, non-essential component of the volume-regulated anion channel (VRAC, also named VSOAC channel), an anion channel required to maintain a constant cell volume in response to extracellular or intracellular osmotic changes. The VRAC channel conducts iodide better than chloride and can also conduct organic osmolytes like taurine. Plays a redundant role in the efflux of amino acids, such as aspartate, in response to osmotic stress. LRRC8A and LRRC8D are required for the uptake of the drug cisplatin. Channel activity requires LRRC8A plus at least one other family member (LRRC8B, LRRC8C, LRRC8D or LRRC8E); channel characteristics depend on the precise subunit composition. Also acts as a regulator of glucose-sensing in pancreatic beta cells: VRAC currents, generated in response to hypotonicity- or glucose-induced beta cell swelling, depolarize cells, thereby causing electrical excitation, leading to increase glucose sensitivity and insulin secretion. VRAC channels containing LRRC8D inhibit transport of immunoreactive cyclic dinucleotide GMP-AMP (2'-3'-cGAMP), an immune messenger produced in response to DNA virus in the cytosol. Mediates the import of the antibiotic blasticidin-S into the cell. This Homo sapiens (Human) protein is Volume-regulated anion channel subunit LRRC8D.